Consider the following 68-residue polypeptide: Arabinogalactan peptide 1 (68 aa).

An N-terminal signal peptide occupies residues 1–30 (MAGQLKSKIVAVAVAAVVVVASSLVGTASA). A lipid anchor (GPI-anchor amidated serine) is attached at Ser-40. Positions 41-68 (GATATAAAAPAFAAVSVAAAALGGYLFC) are cleaved as a propeptide — removed in mature form.

It belongs to the AG-peptide AGP family. In terms of processing, O-glycosylated on hydroxyprolines; noncontiguous hydroxylproline residues are glycosylated with arabinogalactan. As to expression, expressed in roots, stems, flowers and seeds.

It localises to the vacuole. The protein resides in the aleurone grain membrane. Proteoglycan that seems to be implicated in diverse developmental roles such as differentiation, cell-cell recognition, embryogenesis and programmed cell death. This is Arabinogalactan peptide 1 (AGPEP1) from Oryza sativa subsp. japonica (Rice).